The sequence spans 386 residues: Acyl-CoA ligase lcsD (386 aa).

Residues 62 to 132 form an SBD1 region; sequence ELEQTLLAIQ…ELLPACKIIQ (71 aa). Position 107–115 (107–115) interacts with ATP; sequence AVGASGISK. The segment at 133-195 is SBD2; the sequence is GYGMTETTGV…LRSPSVVIGY (63 aa). Substrate is bound at residue Thr-137. The ATP site is built by Asp-216 and Arg-235. Residues 243-245 and 313-316 contribute to the CoA site; these read RGL and HLDG. ATP is bound at residue Lys-331. The tract at residues 352–386 is disordered; it reads REKAANGVHKVHVNGVKRPEKMEVFDLSSDDEDDD.

This sequence belongs to the ATP-dependent AMP-binding enzyme family.

Its pathway is secondary metabolite biosynthesis. Functionally, acyl-CoA ligase; part of the gene cluster that mediates the biosynthesis of the lipopeptide antibiotics leucinostatins that show extensive biological activities, including antimalarial, antiviral, antibacterial, antifungal, and antitumor activities, as well as phytotoxic. Leucinostatin A contains nine amino acid residues, including the unusual amino acid 4-methyl-L-proline (MePro), 2-amino-6-hydroxy-4-methyl-8-oxodecanoic acid (AHyMeOA), 3-hydroxyleucine (HyLeu), alpha-aminoisobutyric acid (AIB), beta-Ala, a 4-methylhex-2-enoic acid at the N-terminus as well as a N1,N1-dimethylpropane-1,2-diamine (DPD) at the C-terminus. The biosynthesis of leucinostatins is probably initiated with the assembly of 4-methylhex-2-enoic acid by a reducing PKS. Two reducing polyketide synthases, lcsB and lcsC, have been identified in the cluster and it is not clear which is the one that assembles 4-methylhex-2-enoic acid since both contain KS, AT, DH, cMT, ER, KR and ACP domains. The polyketide residue might be transferred to the NRPS lcsA, mediated by two additional enzymes, the acyl-CoA ligase lcsD and the thioesterase lcsE. The linear polyketide carboxylic acid, which is released from PKS, is converted to a CoA thioester by lcsD, and then lcsE hydrolyzes the thiol bond and shuttles the polyketide intermediate to lcsA. The C domain of the first module catalyzed the condensation of 4-methylhex-2-enoic acid and MePro carried by domain A1, followed by successive condensations of nine amino acids to trigger the elongation of the linear peptide. A5 and A6 domains of lcsA are proposed to incorporate leucine, A2 AHyMeOA, and A3 incorporates HyLeu. A4, A7 and A8 incorporate AIB. The AHyMeOA in leucinostatin A activated by the A2 might be produced by the second PKS (lcsB or lcsC) present within the cluster. The MePro is probably produced via leucine cyclization and may originate from a separate pathway, independent of the cluster. Another nonproteinogenic amino acid, beta-Ala, could be produced by an aspartic acid decarboxylase also localized outside of the cluster. Two candidates are VFPBJ_01400 and VFPBJ_10476. The final peptide scaffold may be released by the NAD(P)H-dependent thioester reductase (TE) at the C-terminal region of lcsA. Transamination of the lcsA product by the transaminase lcsP may produce DPD at the C-terminus. Further hydroxylation steps performed alternatively by the cytochrome P450 monooxygenases lcsI, lcsK and lcsN then yield the non-methylated leucinostatins precursor. It is also possible that leucines can be hydroxylated prior to their incorporation into the peptide. Varying extents of methylation then lead to the formation of leucinostatins A and B. This chain is Acyl-CoA ligase lcsD, found in Purpureocillium lilacinum (Paecilomyces lilacinus).